The sequence spans 161 residues: Bifurcating [FeFe] hydrogenase gamma subunit (161 aa).

[2Fe-2S] cluster is bound by residues cysteine 78, cysteine 83, cysteine 119, and cysteine 123.

It belongs to the complex I 24 kDa subunit family. In terms of assembly, heterotrimer composed of HydA (alpha subunit), HydB (beta subunit) and HydC (gamma subunit). Near neutral and acidic pH conditions favor oligomerization of the heterotrimeric holoenzyme. The cofactor is [2Fe-2S] cluster.

It is found in the cytoplasm. It carries out the reaction 2 H2 + 2 oxidized [2Fe-2S]-[ferredoxin] + NAD(+) = 2 reduced [2Fe-2S]-[ferredoxin] + NADH + 3 H(+). Functionally, catalyzes the oxidation of the physiological electron carriers NADH and reduced ferredoxin, coupled to the production of H(2). Acts as a bifurcating [FeFe] hydrogenase, which uses the exergonic oxidation of reduced ferredoxin to drive the unfavorable oxidation of NADH to produce H(2). The gamma subunit might be the site where reduced ferredoxin is oxidized. The chain is Bifurcating [FeFe] hydrogenase gamma subunit from Thermotoga maritima (strain ATCC 43589 / DSM 3109 / JCM 10099 / NBRC 100826 / MSB8).